The following is a 607-amino-acid chain: Matrix metalloproteinase-16 (607 aa).

An N-terminal signal peptide occupies residues 1–31; that stretch reads MILLTFSTGRRLDFVHHSGVFFLQTLLWILC. A propeptide spanning residues 32–119 is cleaved from the precursor; sequence ATVCGTEQYF…SSKFHIRRKR (88 aa). Asparagine 83 is a glycosylation site (N-linked (GlcNAc...) asparagine). Residues 99–106 carry the Cysteine switch motif; it reads PRCGVPDQ. Cysteine 101 lines the Zn(2+) pocket. Over 120–564 the chain is Extracellular; that stretch reads YALTGQKWQH…LDNTASTVKA (445 aa). Aspartate 183 is a Ca(2+) binding site. Zn(2+) contacts are provided by histidine 193 and aspartate 195. Positions 200, 201, 203, and 205 each coordinate Ca(2+). A Zn(2+)-binding site is contributed by histidine 208. Residues glycine 215, glycine 217, and aspartate 219 each contribute to the Ca(2+) site. Histidine 221 contributes to the Zn(2+) binding site. Residues aspartate 223 and glutamate 226 each contribute to the Ca(2+) site. Residue histidine 246 coordinates Zn(2+). Glutamate 247 is a catalytic residue. Residues histidine 250 and histidine 256 each coordinate Zn(2+). Positions 281-340 are disordered; the sequence is DDLQGIQKIYGPPDKIPPPTRPLPTVPPHRSIPPADPRKNDRPKPPRPPTGRPSYPGAKP. Positions 294-315 are enriched in pro residues; that stretch reads DKIPPPTRPLPTVPPHRSIPPA. 4 Hemopexin repeats span residues 340–388, 389–434, 436–484, and 485–532; these read PNIC…WRGL, PPSI…GSGI, PHGI…KGIP, and ESPQ…FMGC. A disulfide bond links cysteine 343 and cysteine 532. A helical transmembrane segment spans residues 565 to 585; sequence IAIVIPCILALCLLVLVYTVF. Residues 586-607 are Cytoplasmic-facing; the sequence is QFKRKGTPRHILYCKRSMQEWV.

Belongs to the peptidase M10A family. As to quaternary structure, interacts with CSPG4 through CSPG4 chondroitin sulfate glycosaminoglycan. The cofactor is Zn(2+). Requires Ca(2+) as cofactor. The precursor is cleaved by a furin endopeptidase. Expressed in heart, brain, placenta, ovary and small intestine. Isoform Short is found in the ovary.

Its subcellular location is the cell membrane. It localises to the secreted. The protein localises to the extracellular space. The protein resides in the extracellular matrix. It is found in the cell surface. With respect to regulation, TIMP-2 shows little inhibitory activity compared to TIMP-1. TIMP-1 seems to have less binding affinity than TIMP-2 for the short isoform. Its function is as follows. Endopeptidase that degrades various components of the extracellular matrix, such as collagen type III and fibronectin. Activates progelatinase A. Involved in the matrix remodeling of blood vessels. Isoform short cleaves fibronectin and also collagen type III, but at lower rate. It has no effect on type I, II, IV and V collagen. However, upon interaction with CSPG4, it may be involved in degradation and invasion of type I collagen by melanoma cells. In Homo sapiens (Human), this protein is Matrix metalloproteinase-16.